A 253-amino-acid chain; its full sequence is Major prion protein (253 aa).

The N-terminal stretch at 1-22 (MANLGCWMLVLFVATWSDLGLC) is a signal peptide. The interval 23–230 (KKRPKPGGWN…ESQAYYQRGS (208 aa)) is interaction with GRB2, ERI3 and SYN1. The tract at residues 26-108 (PKPGGWNTGG…WNKPSKPKTS (83 aa)) is disordered. Repeat copies occupy residues 51–59 (PQGGGGWGQ), 60–67 (PHGGGWGQ), 68–75 (PHGGGWGQ), 76–83 (PHGGGWGQ), and 84–91 (PHGGGWGQ). Positions 51-91 (PQGGGGWGQPHGGGWGQPHGGGWGQPHGGGWGQPHGGGWGQ) are 5 X 8 AA tandem repeats of P-H-G-G-G-W-G-Q. The span at 52 to 95 (QGGGGWGQPHGGGWGQPHGGGWGQPHGGGWGQPHGGGWGQGGGT) shows a compositional bias: gly residues. Cu(2+) contacts are provided by His-61, Gly-62, Gly-63, His-69, Gly-70, Gly-71, His-77, Gly-78, Gly-79, His-85, Gly-86, and Gly-87. A disulfide bridge links Cys-179 with Cys-214. Residues Asn-181 and Asn-197 are each glycosylated (N-linked (GlcNAc...) asparagine). A lipid anchor (GPI-anchor amidated serine) is attached at Ser-230. Positions 231–253 (SMVFFSSPPVILLISFLIFLIVG) are cleaved as a propeptide — removed in mature form.

The protein belongs to the prion family. In terms of assembly, monomer and homodimer. Has a tendency to aggregate into amyloid fibrils containing a cross-beta spine, formed by a steric zipper of superposed beta-strands. Soluble oligomers may represent an intermediate stage on the path to fibril formation. Copper binding may promote oligomerization. Interacts with GRB2, APP, ERI3/PRNPIP and SYN1. Mislocalized cytosolically exposed PrP interacts with MGRN1; this interaction alters MGRN1 subcellular location and causes lysosomal enlargement. Interacts with KIAA1191.

The protein resides in the cell membrane. The protein localises to the golgi apparatus. Its primary physiological function is unclear. Has cytoprotective activity against internal or environmental stresses. May play a role in neuronal development and synaptic plasticity. May be required for neuronal myelin sheath maintenance. May play a role in iron uptake and iron homeostasis. Soluble oligomers are toxic to cultured neuroblastoma cells and induce apoptosis (in vitro). Association with GPC1 (via its heparan sulfate chains) targets PRNP to lipid rafts. Also provides Cu(2+) or Zn(2+) for the ascorbate-mediated GPC1 deaminase degradation of its heparan sulfate side chains. This Trachypithecus francoisi (Francois' leaf monkey) protein is Major prion protein (PRNP).